Here is a 472-residue protein sequence, read N- to C-terminus: UDP-N-acetylmuramate--L-alanine ligase (472 aa).

An ATP-binding site is contributed by 119–125 (GTHGKTT).

Belongs to the MurCDEF family.

Its subcellular location is the cytoplasm. It catalyses the reaction UDP-N-acetyl-alpha-D-muramate + L-alanine + ATP = UDP-N-acetyl-alpha-D-muramoyl-L-alanine + ADP + phosphate + H(+). It participates in cell wall biogenesis; peptidoglycan biosynthesis. Cell wall formation. The chain is UDP-N-acetylmuramate--L-alanine ligase from Caulobacter sp. (strain K31).